A 1981-amino-acid polypeptide reads, in one-letter code: MVNLDFEVEPCLFPSLSTRSVNQSHGKAMAYQHGFEWEVTISEDSVFQGIVLSWNILLAKYTDSTTITFGVISGSEGNKCHDDTTVDEYCTSFHPESCLPTVLPLASRRQYRFHEWKYDARINTCIANGSHKVWLDHWINSPNHGIKLILVVEQGRWPCMSLYGKPSFIDEGSVRLLCTAFQHILDCVLENQMGLLKNIEVTPSHHYQRILDWNSHIPKEPLAECIHDLIQRRCMETPDAEAICAWDGTMSYAALEQESARTMEWLQHHGVGPETIVPLLFEKSKWTVVAVLGVLKAGAAFVLLETSHPIERLKSICHDIGACIILTSALCKEIGSNLADITMSVPCDVERKLPCGDGKMKPCIRAQPRNAAYVAYTSGSTGKPKGVIIEHASFCTNAMVSSEAQNLNGCSRVLQFASYAFDVSIHETLVPLMLGGCVCIPSASQRVNSLQEAIVQLRVNWMELTPSVTRLLSPHKIPNVKTLVVGGESISPAELARWAGHIRLNVAYGPAECTVVSMVQSNVTKHGDPLSIGRGCGGSVWIVEPQNHNVLVPIGAPGELLIGGPIVGRGYLNRPEQTAAVFIQNPPWQAENNSRFYKTGDVVRQNSDGSVVFLGRKDTQVKLRGQRIELGEIEYQASGFFPGAAVAVEVGKLYHGHPALVLFVEWKSLENRKRCSGTNCCRTVQNDKTHFMSNAQWAKAGLSQILPSYMVPDIIVPLCTIPLSHSAKVDRKALRAMITRWSKDEVKLYQVTANSTSCGRYPHHAGQKYDEMVRMVARVLSLDPSEVREHDNFFQLGGDSLSAIMLSREIDTIPLLSLTVADIFQSASIAELFHRSQKTPLPESMEPGIPTKVLPFSLLDPMKIDNYRERAAEHCGVSPSQIEDIYPCSPLQARLMARTSRQPGAFQGHFNFRLSLDTDWDRLHWAWNKAADFLPILRTRIINTWQLAEGNPLQVVVRDKDIEWVEVAASESEPKSRMSFGSPLIYCVAVRAKHSPVLILNIHHALFDLVVFEQILEAVKAAYQGKPLVWRPFSPFIKYVQDLNRSQANEFWKREFTGLRAVPFPADITPGRSNLDAIRWTRKSFCLGHQNQAGITLSSLIRLAWAMVLSQYTGSLDVVFGTTVMGRNMPGTADVGGPTIATYPLRITLRGEESIKEALQRIQNHGIAIAPFEQSGIQHIRHSSPESAIACSFRNMLVIQPSSDNSLLAKRDLSPLLVLEERGSWKQKSYVNFSTQALNVVCEPGAGHLDVSAYFDQSILSSQEVEEMLSCMDRLLQLVLQHPDASMGTILSQSQSPDGDLDRYEERTSLARLEQEACQYLGNGVRVAAVWIIPMASHVPKLALFVGAMSLNTVSDGRWILAGVKEPLRTRLVQMMHEFQNNPLGRAVPFCCIPVPLQYRPSMPGLFLDRARAQEAASKFTLKTLTSWQNTGDSGFEEPLLPLEATLRRALAKVLSLEPEAIGVNDDLVSLGCDSLVAMQFAAQCDRQSLRLTISEIFQATSLRCLASTLNSRPSGDPTPALEAFALLKPMYGDRESFEQDIQRSVDGWNIKESIDAFPCTTAHLGLLSGLGTCQSHTIWEIGSPEEQIDLVSFAKAWLNLVNRHAALRTLLLPSRSNPSEWLHVVLKSSPVGVKVVTKLKNASLLKIARKPLLSRDGLGGLPYRFAVYQSTTGRTLCKLEARYAFLDAFSVLVLMKELRRILDCLPTSDPLLPSYSSWVAYLRRWSEDPLHLQFWDRYLAGLKPCILRASRNHHHHQHEGRQHHGASETNGNRPRLIKSHRQIVVQDAVALRKYCDQRELTITNILQVAWALTLKEQTGIEDICFGALVSGRDVPVDHVGNIVGSLFNVLACRIQMPATDSISSVLLENQQMMRERASHQFCSLQEVTRLVLKARPEASSLFNTCLSVEQPLSDEAETGKGFRALETVEETEYDLIVAATVFPDRIQASIMYWSYFCDPARAATIAETFAQSIERIILCA.

An adenylation region spans residues 251–638 (SYAALEQESA…ELGEIEYQAS (388 aa)). The 78-residue stretch at 763–840 (HHAGQKYDEM…ELFHRSQKTP (78 aa)) folds into the Carrier 1 domain. Ser800 bears the O-(pantetheine 4'-phosphoryl)serine mark. The segment at 883–1293 (EDIYPCSPLQ…DASMGTILSQ (411 aa)) is condensation 1. Positions 1438-1514 (EPLLPLEATL…CLASTLNSRP (77 aa)) constitute a Carrier 2 domain. Residue Ser1475 is modified to O-(pantetheine 4'-phosphoryl)serine. Positions 1586-1978 (EEQIDLVSFA…TFAQSIERII (393 aa)) are condensation 1. The disordered stretch occupies residues 1754-1774 (HHHHQHEGRQHHGASETNGNR).

It belongs to the NRP synthetase family. It depends on pantetheine 4'-phosphate as a cofactor.

The catalysed reaction is 2 L-tryptophan = cyclo(L-Trp-L-Trp) + 2 H2O. The protein operates within alkaloid biosynthesis. In terms of biological role, nonribosomal peptide synthetase; part of the gene cluster that mediates the biosynthesis of okaramine B, a prenylated indole alkaloid that possesses an unusual octacyclic ring system, including a four-membered azetidine ring and an eight-membered azocine ring, and that exhibits insecticidal activity against silkworm larvae. Within the pathway, okaA acts as a bimodular non-ribosomal peptide synthetase (NRPS) that condenses two tryptophan molecules into cyclo(L-Trp-L-Trp). Prenylation by the prenyltransferase okaC then leads to the formation of cyclo(N8-(alpha,alpha-dimethylallyl)-L-Trp-6a-(alpha,alpha-dime-thylallyl)-L-Trp). This is followed by indole 2,3-epoxidation by the FAD-dependent monooxygenase okaB to facilitate the formation of the hexahydropyrrolo[2,3-b]indole (HPI) moiety of okaramine C. The cytochrome P450 monooxygenase okaD then likely catalyzes formation of the eight-membered ring of okaramine A. The dioxygenase okaE further forms the unusual 2-dimethyl-3-methyl-azetidine ring to yield 12-deshydroxyl okaramine E, as well as the hydroxylation of 12-deshydroxyl okaramine E to produce okaramine E. The cytochrome P450 monoxygenase okaG converts 12-deshydroxyl okaramine E into 3-desmethyl okaramine B which is further methylated by the methyltransferase okaF into okaramine B. In a shunt pathway, okaG and okaF together are also able to convert okaramine E into okaramine D. Okaramine H is produced by nonenzymatic conversion from okaramine A. This chain is Nonribosomal peptide synthetase rstn8, found in Penicillium ochrochloron.